Reading from the N-terminus, the 193-residue chain is p53 apoptosis effector related to PMP-22 (193 aa).

The next 4 helical transmembrane spans lie at 12 to 32 (RWIL…ALAG), 81 to 101 (LFCG…ALCG), 110 to 130 (VIGG…VIYP), and 151 to 171 (WAYG…FFFC).

This sequence belongs to the TMEM47 family. As to expression, expressed in the stratified squamous skin epithelium of the skin and the tongue, but not in simple epithelia (at protein level). Expressed in the oral epithelium, tongue epithelium and skin (at protein level). More abundant in areas of lower flow stress in the inner curvature compared to the outer curvature regions of the aorta (at protein level). Expressed in luminal cells and myoepithelium cells of the mammary epithelium (at protein level). Expression increases during the early stages of pregnancy before decreasing before birth, expression continues to be weak during involution which mirrors decreased desmosome abundance and organization at these time points (at protein level). Expressed by epithelial cells at the mucosal surface in the proximal colon (at protein level). Expressed in apoptotic cells.

The protein resides in the cell junction. It localises to the desmosome. It is found in the cell membrane. The protein localises to the cytoplasm. Its function is as follows. Component of intercellular desmosome junctions. Plays a role in stratified epithelial integrity and cell-cell adhesion by promoting desmosome assembly. Thereby plays a role in barrier function of the skin against infection. Plays a role in mammary epithelial tissue homeostasis and remodeling during and after pregnancy, potentially via its involvement in desmosome cell-cell junctions. Required for tooth enamel development via facilitating desmosome-mediated ameloblast adhesion to the stratum intermedium during the transitional stage of amelogenesis. May also play a role in downstream transcriptional regulation of other genes involved in amelogenesis such as AMBN, ENAM, MMP20 and KLK4. Plays a role as an effector in the TP53-dependent apoptotic pathway. Positively regulates apoptosis in T-helper 17 (Th17) cell populations via caspase-dependent signaling. Promotes neutrophil transepithelial migration in response to chemoattractants such as hepoxilin A3 (HXA3), N-Formylmethionyl-leucyl-phenylalanine (fMLP) and CXCL8/IL-8. May act as a positive regulator of endothelial cell apoptosis in response to blood flow-derived shear stress. In Mus musculus (Mouse), this protein is p53 apoptosis effector related to PMP-22.